The sequence spans 22 residues: Caerin-3.1 (22 aa).

Lys-22 bears the Lysine amide mark.

The protein belongs to the frog skin active peptide (FSAP) family. Caerin subfamily. Expressed by the skin dorsal glands.

It localises to the secreted. In terms of biological role, antibacterial peptide with narrow spectrum of activity. Inhibits the formation of NO by neuronal nitric oxide synthase. This Litoria rothii (Roth's tree frog) protein is Caerin-3.1.